The primary structure comprises 1692 residues: Protein TOPAZ1 (1692 aa).

Disordered stretches follow at residues 1 to 135 (MRRP…PGLD), 600 to 629 (ELSR…TGNK), and 894 to 919 (EPNV…EPSD). Gly residues predominate over residues 31-40 (GAAGGCGPEA). Positions 95–116 (SDPRGLEAAKEAELPLQTERHT) are enriched in basic and acidic residues. Over residues 608–627 (VISNTTEDTQLTSETQSLTG) the composition is skewed to polar residues. The span at 902-919 (QSTDSKYMETPVKKEPSD) shows a compositional bias: basic and acidic residues.

Its subcellular location is the cytoplasm. The protein resides in the cytosol. Important for normal spermatogenesis and male fertility. Specifically required for progression to the post-meiotic stages of spermatocyte development. Seems to be necessary for normal expression levels of a number of testis-expressed gene transcripts, although its role in this process is unclear. This is Protein TOPAZ1 (TOPAZ1) from Homo sapiens (Human).